The primary structure comprises 124 residues: MSNLFRSLASSMRALSLAAPRATAVNTTKTVVSTHQTRCLSQGLLSRHICTPMCSHNRPVAVCQSAKNGLQSKQQSRGMKVHSAIKKRCEHCKVVRRKANKRQNGYLYIICPANPRHKQRQGYR.

Belongs to the bacterial ribosomal protein bL36 family. Component of the mitochondrial large ribosomal subunit (mt-LSU). Mature N.crassa 74S mitochondrial ribosomes consist of a small (37S) and a large (54S) subunit. The 37S small subunit contains a 16S ribosomal RNA (16S mt-rRNA) and 32 different proteins. The 54S large subunit contains a 23S rRNA (23S mt-rRNA) and 42 different proteins. bL36m has a zinc binding site.

It localises to the mitochondrion. In terms of biological role, component of the mitochondrial ribosome (mitoribosome), a dedicated translation machinery responsible for the synthesis of mitochondrial genome-encoded proteins, including at least some of the essential transmembrane subunits of the mitochondrial respiratory chain. The mitoribosomes are attached to the mitochondrial inner membrane and translation products are cotranslationally integrated into the membrane. This is Large ribosomal subunit protein bL36m (rtc6) from Neurospora crassa (strain ATCC 24698 / 74-OR23-1A / CBS 708.71 / DSM 1257 / FGSC 987).